We begin with the raw amino-acid sequence, 374 residues long: MQSRNELPGSRRVIVKIGSALLTAGGKGLDQPAIGQWVQQIAELRQQGIQVVLVSSGSVAEGMSRLGWKTRPHRLNELQAAASVGQMGLVQTYESLFKRHGLQTAQILLTHDDLSNRERYLNSRSTILTLLELGVIPVINENDTVTTEEIRFGDNDTLGALVANAVEADLLIILTDQAGLFERNPSLDPSAPLVPQAGINDPRLNDMVGDSLSGLGRGGMITKLRAARLAARSGTATVIASGRESGVLPRILDGEELGTLLIPDVSPLIARKRWMAGQLKLKGCFVVDEGAARVLRDAGKSLLPIGVIAVEGEFRRGDLVACTDSAGQEIARGLTNYSAEEARLIMRQPSTRIEEILGYVDEPELIHRDNLVLS.

Lys16 provides a ligand contact to ATP. Residues Ser56, Asp143, and Asn155 each coordinate substrate. 175–176 (TD) lines the ATP pocket. In terms of domain architecture, PUA spans 282–360 (KGCFVVDEGA…TRIEEILGYV (79 aa)).

Belongs to the glutamate 5-kinase family.

The protein localises to the cytoplasm. It carries out the reaction L-glutamate + ATP = L-glutamyl 5-phosphate + ADP. It participates in amino-acid biosynthesis; L-proline biosynthesis; L-glutamate 5-semialdehyde from L-glutamate: step 1/2. Catalyzes the transfer of a phosphate group to glutamate to form L-glutamate 5-phosphate. The protein is Glutamate 5-kinase of Methylococcus capsulatus (strain ATCC 33009 / NCIMB 11132 / Bath).